Consider the following 236-residue polypeptide: Proteasome subunit alpha (236 aa).

This sequence belongs to the peptidase T1A family. In terms of assembly, the 20S proteasome core is composed of 14 alpha and 14 beta subunits that assemble into four stacked heptameric rings, resulting in a barrel-shaped structure. The two inner rings, each composed of seven catalytic beta subunits, are sandwiched by two outer rings, each composed of seven alpha subunits. The catalytic chamber with the active sites is on the inside of the barrel. Has a gated structure, the ends of the cylinder being occluded by the N-termini of the alpha-subunits. Is capped by the proteasome-associated ATPase, ARC.

The protein resides in the cytoplasm. It participates in protein degradation; proteasomal Pup-dependent pathway. The formation of the proteasomal ATPase ARC-20S proteasome complex, likely via the docking of the C-termini of ARC into the intersubunit pockets in the alpha-rings, may trigger opening of the gate for substrate entry. Interconversion between the open-gate and close-gate conformations leads to a dynamic regulation of the 20S proteasome proteolysis activity. Its function is as follows. Component of the proteasome core, a large protease complex with broad specificity involved in protein degradation. The polypeptide is Proteasome subunit alpha (Pseudarthrobacter chlorophenolicus (strain ATCC 700700 / DSM 12829 / CIP 107037 / JCM 12360 / KCTC 9906 / NCIMB 13794 / A6) (Arthrobacter chlorophenolicus)).